Consider the following 1349-residue polypeptide: ABC multidrug transporter mdr1 (1349 aa).

The tract at residues methionine 1–lysine 62 is disordered. A compositionally biased stretch (basic and acidic residues) spans aspartate 35 to leucine 45. Transmembrane regions (helical) follow at residues isoleucine 108–phenylalanine 128, tyrosine 162–isoleucine 182, lysine 234–valine 254, and tryptophan 257–glycine 277. Residues leucine 112 to asparagine 402 enclose the ABC transmembrane type-1 1 domain. The N-linked (GlcNAc...) asparagine glycan is linked to asparagine 308. 2 consecutive transmembrane segments (helical) span residues isoleucine 339–phenylalanine 359 and valine 371–glycine 391. Residues isoleucine 437–alanine 682 enclose the ABC transporter 1 domain. ATP is bound at residue glycine 472–serine 479. 2 helical membrane passes run methionine 779–leucine 799 and phenylalanine 828–isoleucine 848. Positions leucine 780–lysine 1069 constitute an ABC transmembrane type-1 2 domain. N-linked (GlcNAc...) asparagine glycans are attached at residues asparagine 878 and asparagine 893. Transmembrane regions (helical) follow at residues glycine 896–methionine 916, leucine 926–leucine 948, alanine 1016–histidine 1036, and phenylalanine 1043–phenylalanine 1063. In terms of domain architecture, ABC transporter 2 spans isoleucine 1104–leucine 1342. A glycan (N-linked (GlcNAc...) asparagine) is linked at asparagine 1126. Residue glycine 1139–serine 1146 participates in ATP binding.

It belongs to the ABC transporter superfamily. ABCB family. Multidrug resistance exporter (TC 3.A.1.201) subfamily.

The protein localises to the cell membrane. It carries out the reaction voriconazole(in) + ATP + H2O = voriconazole(out) + ADP + phosphate + H(+). In terms of biological role, pleiotropic ABC efflux transporter that may be involved in A.fumigatus adaptation to azoles such as vorizonazole. The chain is ABC multidrug transporter mdr1 from Aspergillus fumigatus (strain ATCC MYA-4609 / CBS 101355 / FGSC A1100 / Af293) (Neosartorya fumigata).